The chain runs to 416 residues: MDIGAIKGVDPEVFEIIMQEALRQQEGLELIASENTTSRAVMAAQGSVLTNKYAEGYPSKRYYGGCAMVDRAETLAIDRARELFKAEYANVQPHSGSTANMAAYFSVIKPGDTVLAMDLSHGGHLTHGSPVSFSGRLFNFVHYGLSGETEMIDMDEVAALAEKHRPKLIVAGASAYPRIIDFKAFSDIARSVNALFMVDMAHIAGLVAAGVHPSPVPHADIVTTTTHKTLRGPRGGLILSSNEIGPKISSQIFPGIQGGPLMHVIAAKAVALKEALSPSFAQYQRQVVANAATLADALMDRGMKLVSNGTDNHLMLLNLTHNGISGKDAENRLGAAGITVNKNAVPNDPRGPMITSGIRIGTPLVTTRGMGETEMDLVAELITQALEAPATAETVREKVRSLCAQFPLYKDDTTRG.

(6S)-5,6,7,8-tetrahydrofolate-binding positions include Leu-119 and 123–125 (GHL). N6-(pyridoxal phosphate)lysine is present on Lys-228. Residue Glu-243 coordinates (6S)-5,6,7,8-tetrahydrofolate.

This sequence belongs to the SHMT family. In terms of assembly, homodimer. The cofactor is pyridoxal 5'-phosphate.

It localises to the cytoplasm. It catalyses the reaction (6R)-5,10-methylene-5,6,7,8-tetrahydrofolate + glycine + H2O = (6S)-5,6,7,8-tetrahydrofolate + L-serine. It participates in one-carbon metabolism; tetrahydrofolate interconversion. It functions in the pathway amino-acid biosynthesis; glycine biosynthesis; glycine from L-serine: step 1/1. In terms of biological role, catalyzes the reversible interconversion of serine and glycine with tetrahydrofolate (THF) serving as the one-carbon carrier. This reaction serves as the major source of one-carbon groups required for the biosynthesis of purines, thymidylate, methionine, and other important biomolecules. Also exhibits THF-independent aldolase activity toward beta-hydroxyamino acids, producing glycine and aldehydes, via a retro-aldol mechanism. This is Serine hydroxymethyltransferase from Desulforapulum autotrophicum (strain ATCC 43914 / DSM 3382 / VKM B-1955 / HRM2) (Desulfobacterium autotrophicum).